A 91-amino-acid polypeptide reads, in one-letter code: Large ribosomal subunit protein bL28 (91 aa).

The protein belongs to the bacterial ribosomal protein bL28 family.

This chain is Large ribosomal subunit protein bL28, found in Protochlamydia amoebophila (strain UWE25).